The primary structure comprises 88 residues: MSTTVVKPEIIAQYKTHDKDTGSSEVQVALLTARINHLTEHLRTHRKDFHSRRGLLQMASRRRKLLDYLKKHDLPKYTELLQKLNLRK.

The protein belongs to the universal ribosomal protein uS15 family. In terms of assembly, part of the 30S ribosomal subunit. Forms a bridge to the 50S subunit in the 70S ribosome, contacting the 23S rRNA.

Functionally, one of the primary rRNA binding proteins, it binds directly to 16S rRNA where it helps nucleate assembly of the platform of the 30S subunit by binding and bridging several RNA helices of the 16S rRNA. Forms an intersubunit bridge (bridge B4) with the 23S rRNA of the 50S subunit in the ribosome. This is Small ribosomal subunit protein uS15 from Opitutus terrae (strain DSM 11246 / JCM 15787 / PB90-1).